The sequence spans 305 residues: UDP-3-O-acyl-N-acetylglucosamine deacetylase (305 aa).

Histidine 79, histidine 238, and aspartate 242 together coordinate Zn(2+). Histidine 265 serves as the catalytic Proton donor.

The protein belongs to the LpxC family. Requires Zn(2+) as cofactor.

It catalyses the reaction a UDP-3-O-[(3R)-3-hydroxyacyl]-N-acetyl-alpha-D-glucosamine + H2O = a UDP-3-O-[(3R)-3-hydroxyacyl]-alpha-D-glucosamine + acetate. It participates in glycolipid biosynthesis; lipid IV(A) biosynthesis; lipid IV(A) from (3R)-3-hydroxytetradecanoyl-[acyl-carrier-protein] and UDP-N-acetyl-alpha-D-glucosamine: step 2/6. Its function is as follows. Catalyzes the hydrolysis of UDP-3-O-myristoyl-N-acetylglucosamine to form UDP-3-O-myristoylglucosamine and acetate, the committed step in lipid A biosynthesis. The chain is UDP-3-O-acyl-N-acetylglucosamine deacetylase from Salmonella agona (strain SL483).